Here is a 163-residue protein sequence, read N- to C-terminus: Protein-export protein SecB (163 aa).

The protein belongs to the SecB family. As to quaternary structure, homotetramer, a dimer of dimers. One homotetramer interacts with 1 SecA dimer.

It is found in the cytoplasm. One of the proteins required for the normal export of preproteins out of the cell cytoplasm. It is a molecular chaperone that binds to a subset of precursor proteins, maintaining them in a translocation-competent state. It also specifically binds to its receptor SecA. The protein is Protein-export protein SecB of Brucella anthropi (strain ATCC 49188 / DSM 6882 / CCUG 24695 / JCM 21032 / LMG 3331 / NBRC 15819 / NCTC 12168 / Alc 37) (Ochrobactrum anthropi).